Consider the following 427-residue polypeptide: Enolase (427 aa).

Residue glutamine 163 participates in (2R)-2-phosphoglycerate binding. The active-site Proton donor is the glutamate 205. Positions 242, 285, and 312 each coordinate Mg(2+). (2R)-2-phosphoglycerate is bound by residues lysine 337, arginine 366, serine 367, and lysine 388. The Proton acceptor role is filled by lysine 337.

This sequence belongs to the enolase family. It depends on Mg(2+) as a cofactor.

The protein resides in the cytoplasm. The protein localises to the secreted. Its subcellular location is the cell surface. The enzyme catalyses (2R)-2-phosphoglycerate = phosphoenolpyruvate + H2O. It functions in the pathway carbohydrate degradation; glycolysis; pyruvate from D-glyceraldehyde 3-phosphate: step 4/5. In terms of biological role, catalyzes the reversible conversion of 2-phosphoglycerate (2-PG) into phosphoenolpyruvate (PEP). It is essential for the degradation of carbohydrates via glycolysis. The sequence is that of Enolase from Azorhizobium caulinodans (strain ATCC 43989 / DSM 5975 / JCM 20966 / LMG 6465 / NBRC 14845 / NCIMB 13405 / ORS 571).